Consider the following 302-residue polypeptide: Aspartate carbamoyltransferase catalytic subunit (302 aa).

Residues Arg-53 and Thr-54 each contribute to the carbamoyl phosphate site. Residue Lys-82 coordinates L-aspartate. Residues Arg-103, His-131, and Gln-134 each contribute to the carbamoyl phosphate site. 2 residues coordinate L-aspartate: Arg-164 and Arg-223. The carbamoyl phosphate site is built by Leu-260 and Pro-261.

It belongs to the aspartate/ornithine carbamoyltransferase superfamily. ATCase family. Heterooligomer of catalytic and regulatory chains.

It carries out the reaction carbamoyl phosphate + L-aspartate = N-carbamoyl-L-aspartate + phosphate + H(+). The protein operates within pyrimidine metabolism; UMP biosynthesis via de novo pathway; (S)-dihydroorotate from bicarbonate: step 2/3. Catalyzes the condensation of carbamoyl phosphate and aspartate to form carbamoyl aspartate and inorganic phosphate, the committed step in the de novo pyrimidine nucleotide biosynthesis pathway. This Methanococcus vannielii (strain ATCC 35089 / DSM 1224 / JCM 13029 / OCM 148 / SB) protein is Aspartate carbamoyltransferase catalytic subunit.